The primary structure comprises 363 residues: MGFKCGFVGLPNVGKSTLFNYLTKLNIPADNYPFCTIKSNVGIVPVLDNRLNKIAQVVCSNKIIPATIELVDIAGLVKGAYKGEGLGNQFLDHIRDTNVIMHIVRCFENRYVTHIYGSVDPVRDVQIINLELILSDIEVCKNRMCKLEINKLSHNKQVNKELLILKKCVYHLEKSKSLRSLNLTEEEIFVINYLRLITLKPVVYIFNISIDQSRNLYKREIFDIIKNEHNAKTVNVCLDLMQSSKNDVSAYDHLSLKYKQLFNKMLKNVIWAGFNALNLITFFTAGKKEVHAWTTTNNLFIFQSVKCIHTDLSKGFIRAQVISYDDFIKYKGEKRSKELGKIRIEGKRYVICDGDIIHVLYNV.

The OBG-type G domain occupies 3 to 257 (FKCGFVGLPN…VSAYDHLSLK (255 aa)). 12-17 (NVGKST) lines the ATP pocket. Mg(2+)-binding residues include serine 16 and threonine 36. One can recognise a TGS domain in the interval 278 to 361 (NLITFFTAGK…CDGDIIHVLY (84 aa)).

The protein belongs to the TRAFAC class OBG-HflX-like GTPase superfamily. OBG GTPase family. YchF/OLA1 subfamily. Requires Mg(2+) as cofactor.

ATPase that binds to both the 70S ribosome and the 50S ribosomal subunit in a nucleotide-independent manner. The protein is Ribosome-binding ATPase YchF of Buchnera aphidicola subsp. Baizongia pistaciae (strain Bp).